The primary structure comprises 281 residues: MINEYLKLMKPHVIWLLVLSALVGYIAAAGPLVNPIKLIELTVVGFLSTGGSAAFNMYYERDIDSLMVRTMKRPIPSGKVTPLNALTFSIAVSLSGFTLSYLWLGSWVTLMIALGWFFYAVLYTIMLKRRTWLNIVIGGFAGNAALLSGWIMAKPIDLESILLSMVIYVWIPAHIWSLAYYARDDYKRVNVPMLPTMVNEKASVRIISILNLVSIIYMLVLYQLYMAKLIGYILVIPATLAGIIVTIKALIKPSNESFRTMFKATSPILLLFLLAVIISRI.

A run of 9 helical transmembrane segments spans residues 13–33, 38–58, 85–105, 107–127, 132–152, 161–181, 206–226, 227–247, and 261–281; these read VIWL…GPLV, LIEL…FNMY, ALTF…LWLG, WVTL…TIML, WLNI…GWIM, ILLS…LAYY, IISI…QLYM, AKLI…IVTI, and MFKA…ISRI.

It belongs to the UbiA prenyltransferase family. Protoheme IX farnesyltransferase subfamily.

The protein localises to the cell membrane. It carries out the reaction heme b + (2E,6E)-farnesyl diphosphate + H2O = Fe(II)-heme o + diphosphate. It participates in porphyrin-containing compound metabolism; heme O biosynthesis; heme O from protoheme: step 1/1. In terms of biological role, converts heme B (protoheme IX) to heme O by substitution of the vinyl group on carbon 2 of heme B porphyrin ring with a hydroxyethyl farnesyl side group. This Caldivirga maquilingensis (strain ATCC 700844 / DSM 13496 / JCM 10307 / IC-167) protein is Protoheme IX farnesyltransferase.